A 337-amino-acid chain; its full sequence is Ketol-acid reductoisomerase (NADP(+)) (337 aa).

Positions 3–183 constitute a KARI N-terminal Rossmann domain; it reads VEMFYDDDAD…GGARAGVIKT (181 aa). Residues 26 to 29, Lys-49, Ser-52, Ser-54, and 84 to 87 contribute to the NADP(+) site; these read YGSQ and DTAQ. The active site involves His-109. Gly-135 lines the NADP(+) pocket. Residues 184–329 form the KARI C-terminal knotted domain; it reads TFKEETETDL…KKLRDLMSWV (146 aa). The Mg(2+) site is built by Asp-192, Glu-196, Glu-228, and Glu-232. Ser-253 serves as a coordination point for substrate.

Belongs to the ketol-acid reductoisomerase family. The cofactor is Mg(2+).

It catalyses the reaction (2R)-2,3-dihydroxy-3-methylbutanoate + NADP(+) = (2S)-2-acetolactate + NADPH + H(+). It carries out the reaction (2R,3R)-2,3-dihydroxy-3-methylpentanoate + NADP(+) = (S)-2-ethyl-2-hydroxy-3-oxobutanoate + NADPH + H(+). It functions in the pathway amino-acid biosynthesis; L-isoleucine biosynthesis; L-isoleucine from 2-oxobutanoate: step 2/4. The protein operates within amino-acid biosynthesis; L-valine biosynthesis; L-valine from pyruvate: step 2/4. In terms of biological role, involved in the biosynthesis of branched-chain amino acids (BCAA). Catalyzes an alkyl-migration followed by a ketol-acid reduction of (S)-2-acetolactate (S2AL) to yield (R)-2,3-dihydroxy-isovalerate. In the isomerase reaction, S2AL is rearranged via a Mg-dependent methyl migration to produce 3-hydroxy-3-methyl-2-ketobutyrate (HMKB). In the reductase reaction, this 2-ketoacid undergoes a metal-dependent reduction by NADPH to yield (R)-2,3-dihydroxy-isovalerate. The sequence is that of Ketol-acid reductoisomerase (NADP(+)) from Rhodococcus opacus (strain B4).